Consider the following 624-residue polypeptide: DNA mismatch repair protein MutL (624 aa).

This sequence belongs to the DNA mismatch repair MutL/HexB family.

In terms of biological role, this protein is involved in the repair of mismatches in DNA. It is required for dam-dependent methyl-directed DNA mismatch repair. May act as a 'molecular matchmaker', a protein that promotes the formation of a stable complex between two or more DNA-binding proteins in an ATP-dependent manner without itself being part of a final effector complex. The chain is DNA mismatch repair protein MutL from Xanthomonas campestris pv. campestris (strain B100).